The following is a 269-amino-acid chain: Cytochrome c oxidase subunit 3 (269 aa).

Transmembrane regions (helical) follow at residues 21–41, 45–65, 90–110, 138–160, 167–187, 205–225, and 247–267; these read PWPI…ALTM, IGHM…ATLW, GFLL…WAYF, PLLN…HGLV, ALSG…CQYI, FYAG…MLGI, and VLYC…FYWW.

Belongs to the cytochrome c oxidase subunit 3 family. As to quaternary structure, component of the cytochrome c oxidase (complex IV, CIV), a multisubunit enzyme composed of a catalytic core of 3 subunits and several supernumerary subunits. The complex exists as a monomer or a dimer and forms supercomplexes (SCs) in the inner mitochondrial membrane with ubiquinol-cytochrome c oxidoreductase (cytochrome b-c1 complex, complex III, CIII).

It is found in the mitochondrion inner membrane. It catalyses the reaction 4 Fe(II)-[cytochrome c] + O2 + 8 H(+)(in) = 4 Fe(III)-[cytochrome c] + 2 H2O + 4 H(+)(out). Its function is as follows. Component of the cytochrome c oxidase, the last enzyme in the mitochondrial electron transport chain which drives oxidative phosphorylation. The respiratory chain contains 3 multisubunit complexes succinate dehydrogenase (complex II, CII), ubiquinol-cytochrome c oxidoreductase (cytochrome b-c1 complex, complex III, CIII) and cytochrome c oxidase (complex IV, CIV), that cooperate to transfer electrons derived from NADH and succinate to molecular oxygen, creating an electrochemical gradient over the inner membrane that drives transmembrane transport and the ATP synthase. Cytochrome c oxidase is the component of the respiratory chain that catalyzes the reduction of oxygen to water. Electrons originating from reduced cytochrome c in the intermembrane space (IMS) are transferred via the dinuclear copper A center (CU(A)) of subunit 2 and heme A of subunit 1 to the active site in subunit 1, a binuclear center (BNC) formed by heme A3 and copper B (CU(B)). The BNC reduces molecular oxygen to 2 water molecules using 4 electrons from cytochrome c in the IMS and 4 protons from the mitochondrial matrix. The sequence is that of Cytochrome c oxidase subunit 3 (COX3) from Kluyveromyces lactis (strain ATCC 8585 / CBS 2359 / DSM 70799 / NBRC 1267 / NRRL Y-1140 / WM37) (Yeast).